The following is a 312-amino-acid chain: Holliday junction branch migration complex subunit RuvB (312 aa).

The tract at residues 1–168 is large ATPase domain (RuvB-L); that stretch reads MKTNYEFRPQ…FGHIFHLNEY (168 aa). ATP-binding positions include arginine 8, glycine 49, lysine 52, threonine 53, threonine 54, 115–117, arginine 158, tyrosine 168, and arginine 206; that span reads EDF. Threonine 53 contributes to the Mg(2+) binding site. The small ATPAse domain (RuvB-S) stretch occupies residues 169 to 234; the sequence is EPSEISAIIL…DIKNIFKKIQ (66 aa). Residues 237–312 are head domain (RuvB-H); the sequence is EFGLDEQDIN…DFLKNNQLIK (76 aa). DNA contacts are provided by lysine 290 and arginine 295.

It belongs to the RuvB family. In terms of assembly, homohexamer. Forms an RuvA(8)-RuvB(12)-Holliday junction (HJ) complex. HJ DNA is sandwiched between 2 RuvA tetramers; dsDNA enters through RuvA and exits via RuvB. An RuvB hexamer assembles on each DNA strand where it exits the tetramer. Each RuvB hexamer is contacted by two RuvA subunits (via domain III) on 2 adjacent RuvB subunits; this complex drives branch migration. In the full resolvosome a probable DNA-RuvA(4)-RuvB(12)-RuvC(2) complex forms which resolves the HJ.

Its subcellular location is the cytoplasm. The catalysed reaction is ATP + H2O = ADP + phosphate + H(+). Functionally, the RuvA-RuvB-RuvC complex processes Holliday junction (HJ) DNA during genetic recombination and DNA repair, while the RuvA-RuvB complex plays an important role in the rescue of blocked DNA replication forks via replication fork reversal (RFR). RuvA specifically binds to HJ cruciform DNA, conferring on it an open structure. The RuvB hexamer acts as an ATP-dependent pump, pulling dsDNA into and through the RuvAB complex. RuvB forms 2 homohexamers on either side of HJ DNA bound by 1 or 2 RuvA tetramers; 4 subunits per hexamer contact DNA at a time. Coordinated motions by a converter formed by DNA-disengaged RuvB subunits stimulates ATP hydrolysis and nucleotide exchange. Immobilization of the converter enables RuvB to convert the ATP-contained energy into a lever motion, pulling 2 nucleotides of DNA out of the RuvA tetramer per ATP hydrolyzed, thus driving DNA branch migration. The RuvB motors rotate together with the DNA substrate, which together with the progressing nucleotide cycle form the mechanistic basis for DNA recombination by continuous HJ branch migration. Branch migration allows RuvC to scan DNA until it finds its consensus sequence, where it cleaves and resolves cruciform DNA. This chain is Holliday junction branch migration complex subunit RuvB, found in Ureaplasma parvum serovar 3 (strain ATCC 27815 / 27 / NCTC 11736).